Consider the following 438-residue polypeptide: 23S rRNA (uracil(1939)-C(5))-methyltransferase RlmD (438 aa).

The region spanning 10-68 (KTKNVQTITADILDLDYQGLGVAKINGKTWFIENALPHEKVECRILEDKRQYGHAIVKK) is the TRAM domain. 4 residues coordinate [4Fe-4S] cluster: C81, C87, C90, and C168. 6 residues coordinate S-adenosyl-L-methionine: Q271, F300, N305, E321, D348, and D369. Residue C395 is the Nucleophile of the active site.

Belongs to the class I-like SAM-binding methyltransferase superfamily. RNA M5U methyltransferase family. RlmD subfamily.

The enzyme catalyses uridine(1939) in 23S rRNA + S-adenosyl-L-methionine = 5-methyluridine(1939) in 23S rRNA + S-adenosyl-L-homocysteine + H(+). Its function is as follows. Catalyzes the formation of 5-methyl-uridine at position 1939 (m5U1939) in 23S rRNA. This chain is 23S rRNA (uracil(1939)-C(5))-methyltransferase RlmD, found in Haemophilus influenzae (strain ATCC 51907 / DSM 11121 / KW20 / Rd).